Consider the following 156-residue polypeptide: Transcription antitermination protein NusB (156 aa).

This sequence belongs to the NusB family.

Its function is as follows. Involved in transcription antitermination. Required for transcription of ribosomal RNA (rRNA) genes. Binds specifically to the boxA antiterminator sequence of the ribosomal RNA (rrn) operons. This is Transcription antitermination protein NusB from Syntrophotalea carbinolica (strain DSM 2380 / NBRC 103641 / GraBd1) (Pelobacter carbinolicus).